A 147-amino-acid polypeptide reads, in one-letter code: Deoxyuridine 5'-triphosphate nucleotidohydrolase (147 aa).

Arginine 24 provides a ligand contact to Mg(2+). Residues 68 to 70 (PRS), 82 to 85 (GVID), tyrosine 88, glycine 93, isoleucine 95, and arginine 111 each bind dUTP.

This sequence belongs to the dUTPase family. Mg(2+) serves as cofactor.

The enzyme catalyses dUTP + H2O = dUMP + diphosphate + H(+). This enzyme is involved in nucleotide metabolism: it produces dUMP, the immediate precursor of thymidine nucleotides and it decreases the intracellular concentration of dUTP so that uracil cannot be incorporated into DNA. This chain is Deoxyuridine 5'-triphosphate nucleotidohydrolase (OPG046), found in Camelus.